A 64-amino-acid polypeptide reads, in one-letter code: Large ribosomal subunit protein bL35 (64 aa).

This sequence belongs to the bacterial ribosomal protein bL35 family.

In Shewanella baltica (strain OS223), this protein is Large ribosomal subunit protein bL35.